The sequence spans 899 residues: Semaphorin-1A (899 aa).

Over residues 1–20 (MLNSHNTNHNNNSASNSNYN) the composition is skewed to low complexity. The segment at 1 to 24 (MLNSHNTNHNNNSASNSNYNKGHK) is disordered. The Cytoplasmic portion of the chain corresponds to 1–40 (MLNSHNTNHNNNSASNSNYNKGHKMHLKSATAKATIMKHK). The helical transmembrane segment at 41 to 61 (LSKFYGYGWMQVFLLLTVLVI) threads the bilayer. Residues 62 to 657 (GNQSAWQENI…INAQYTVETL (596 aa)) lie on the Extracellular side of the membrane. Asn-63, Asn-90, and Asn-117 each carry an N-linked (GlcNAc...) asparagine glycan. Positions 74-543 (KLYVELGPED…TDSQVVAIQL (470 aa)) constitute a Sema domain. Disulfide bonds link Cys-141–Cys-151 and Cys-169–Cys-178. 3 N-linked (GlcNAc...) asparagine glycosylation sites follow: Asn-187, Asn-207, and Asn-311. Intrachain disulfides connect Cys-288–Cys-402 and Cys-312–Cys-361. N-linked (GlcNAc...) asparagine glycosylation is present at Asn-404. Residues 658-678 (VMAVLAGSIFSLLVGFFTGYF) form a helical membrane-spanning segment. Topologically, residues 679 to 899 (CGRRCHKDED…PKNCSYIYRD (221 aa)) are cytoplasmic. Disordered stretches follow at residues 735 to 766 (VLLP…QGPN) and 798 to 899 (VMGD…IYRD). Over residues 809–827 (FSTTRSVKKAVNNTNTRNR) the composition is skewed to polar residues. Residues 828–837 (SLGRARRQPP) are compositionally biased toward basic residues. The segment covering 847-876 (SNSPQQQQQQSQQPHSSSGSSPVMSNSSSS) has biased composition (low complexity).

Belongs to the semaphorin family. As to expression, expressed by subsets of neurons and muscles.

It is found in the cell membrane. Functionally, involved in growth cone guidance through its role in axonal repulsion. Function in neurons is essential for adult survival, motor neuron survival, and is important for climbing behavior and activity. This Drosophila melanogaster (Fruit fly) protein is Semaphorin-1A.